Here is a 273-residue protein sequence, read N- to C-terminus: Vitamin B12-binding protein (273 aa).

The first 18 residues, 1-18 (MMKTLSSLLLLFSVSLQA), serve as a signal peptide directing secretion. A Fe/B12 periplasmic-binding domain is found at 23–273 (RVISLAPHAT…EHFASIEQKR (251 aa)). Cysteines 183 and 263 form a disulfide.

This sequence belongs to the BtuF family. The complex is composed of two ATP-binding proteins (BtuD), two transmembrane proteins (BtuC) and a solute-binding protein (BtuF).

Its subcellular location is the periplasm. Its function is as follows. Part of the ABC transporter complex BtuCDF involved in vitamin B12 import. Binds vitamin B12 and delivers it to the periplasmic surface of BtuC. The protein is Vitamin B12-binding protein of Vibrio vulnificus (strain YJ016).